The sequence spans 377 residues: 3-dehydroquinate synthase (377 aa).

NAD(+) contacts are provided by residues 113–117 (GVIGD), 137–138 (TT), K150, and K159. E192, H254, and H273 together coordinate Zn(2+).

It belongs to the sugar phosphate cyclases superfamily. Dehydroquinate synthase family. Co(2+) is required as a cofactor. It depends on Zn(2+) as a cofactor. NAD(+) serves as cofactor.

The protein localises to the cytoplasm. The catalysed reaction is 7-phospho-2-dehydro-3-deoxy-D-arabino-heptonate = 3-dehydroquinate + phosphate. Its pathway is metabolic intermediate biosynthesis; chorismate biosynthesis; chorismate from D-erythrose 4-phosphate and phosphoenolpyruvate: step 2/7. Functionally, catalyzes the conversion of 3-deoxy-D-arabino-heptulosonate 7-phosphate (DAHP) to dehydroquinate (DHQ). This is 3-dehydroquinate synthase from Bartonella bacilliformis (strain ATCC 35685 / KC583 / Herrer 020/F12,63).